The chain runs to 244 residues: Carbonic anhydrase (244 aa).

Residues 1-19 form the signal peptide; the sequence is MKGKFSIALMLSACFSASA. One can recognise an Alpha-carbonic anhydrase domain in the interval 23 to 244; the sequence is VHWGYEGSGD…QPLNGRIIIH (222 aa). C46 and C199 are joined by a disulfide. H84 functions as the Proton acceptor in the catalytic mechanism. Zn(2+)-binding residues include H109, H111, and H128. 195–196 is a substrate binding site; the sequence is TT.

The protein belongs to the alpha-carbonic anhydrase family. Zn(2+) serves as cofactor.

Its subcellular location is the periplasm. It carries out the reaction hydrogencarbonate + H(+) = CO2 + H2O. Functionally, reversible hydration of carbon dioxide. The chain is Carbonic anhydrase (cah) from Pectobacterium atrosepticum (strain SCRI 1043 / ATCC BAA-672) (Erwinia carotovora subsp. atroseptica).